Reading from the N-terminus, the 122-residue chain is Ribosome-binding factor A (122 aa).

A compositionally biased stretch (basic and acidic residues) spans 95–111 (PTVERVTRIQRTLREVS). The disordered stretch occupies residues 95–122 (PTVERVTRIQRTLREVSGEDGDGNGTQE).

Belongs to the RbfA family. Monomer. Binds 30S ribosomal subunits, but not 50S ribosomal subunits or 70S ribosomes.

It localises to the cytoplasm. One of several proteins that assist in the late maturation steps of the functional core of the 30S ribosomal subunit. Associates with free 30S ribosomal subunits (but not with 30S subunits that are part of 70S ribosomes or polysomes). Required for efficient processing of 16S rRNA. May interact with the 5'-terminal helix region of 16S rRNA. The chain is Ribosome-binding factor A from Rubrobacter xylanophilus (strain DSM 9941 / JCM 11954 / NBRC 16129 / PRD-1).